Here is a 192-residue protein sequence, read N- to C-terminus: uncharacterized protein (192 aa).

A run of 6 helical transmembrane segments spans residues 5–22 (VPPLFFVCALFFAEGIGL), 42–61 (FLFLGGILITGNWVCIHYVY), 66–88 (LRFLTPLGVGASAFCLSTCSGKL), 101–118 (WGLLYALVFYITYTALNL), 122–139 (LVMWGVSCVGFLCFSTIL), and 159–181 (ALLLASMGFIALSLYGTDELWLF).

Its subcellular location is the cell membrane. This is an uncharacterized protein from Treponema pallidum (strain Nichols).